A 211-amino-acid polypeptide reads, in one-letter code: N-(5'-phosphoribosyl)anthranilate isomerase (211 aa).

Belongs to the TrpF family.

It catalyses the reaction N-(5-phospho-beta-D-ribosyl)anthranilate = 1-(2-carboxyphenylamino)-1-deoxy-D-ribulose 5-phosphate. Its pathway is amino-acid biosynthesis; L-tryptophan biosynthesis; L-tryptophan from chorismate: step 3/5. This Pseudomonas aeruginosa (strain LESB58) protein is N-(5'-phosphoribosyl)anthranilate isomerase.